The following is a 337-amino-acid chain: MAIELFYDADADLSIIQGRKVAIIGYGSQGHAHAQNLRDSGVEVVIGLREGSKSAEKAKEAGFEVKTTAEAAAWANLIMILAPDTSQASIFTNDVEPNLNEGDALFFGHGLNIHFDLIKPADNIIVGMVAPKGPGHLVRRQFVDGKGVPCLIAIDQDPTGDAQALALSYASAIGGGRAGIIPTTFEAETVTDLFGEQAVLCGGTEELVKTGFEVLTEAGYEPEMAYFEVLHELKLIVDLMFEGGITNMNYSVSDTAEFGGYLSGPRVINADTKERMKDILTDIQDGTFTKRLIANVENGNTELEGLRAKYAEHPIEETGAKLRDLMSWVKNPLTETA.

One can recognise a KARI N-terminal Rossmann domain in the interval 3-183; the sequence is IELFYDADAD…GGGRAGIIPT (181 aa). NADP(+) is bound by residues 26–29, arginine 49, serine 52, serine 54, and 84–87; these read YGSQ and DTSQ. Residue histidine 109 is part of the active site. Glycine 135 is a binding site for NADP(+). The KARI C-terminal knotted domain maps to 184–329; it reads TFEAETVTDL…AKLRDLMSWV (146 aa). Positions 192, 196, 228, and 232 each coordinate Mg(2+). Substrate is bound at residue serine 253.

Belongs to the ketol-acid reductoisomerase family. Requires Mg(2+) as cofactor.

The catalysed reaction is (2R)-2,3-dihydroxy-3-methylbutanoate + NADP(+) = (2S)-2-acetolactate + NADPH + H(+). It carries out the reaction (2R,3R)-2,3-dihydroxy-3-methylpentanoate + NADP(+) = (S)-2-ethyl-2-hydroxy-3-oxobutanoate + NADPH + H(+). It functions in the pathway amino-acid biosynthesis; L-isoleucine biosynthesis; L-isoleucine from 2-oxobutanoate: step 2/4. Its pathway is amino-acid biosynthesis; L-valine biosynthesis; L-valine from pyruvate: step 2/4. Involved in the biosynthesis of branched-chain amino acids (BCAA). Catalyzes an alkyl-migration followed by a ketol-acid reduction of (S)-2-acetolactate (S2AL) to yield (R)-2,3-dihydroxy-isovalerate. In the isomerase reaction, S2AL is rearranged via a Mg-dependent methyl migration to produce 3-hydroxy-3-methyl-2-ketobutyrate (HMKB). In the reductase reaction, this 2-ketoacid undergoes a metal-dependent reduction by NADPH to yield (R)-2,3-dihydroxy-isovalerate. This chain is Ketol-acid reductoisomerase (NADP(+)), found in Corynebacterium efficiens (strain DSM 44549 / YS-314 / AJ 12310 / JCM 11189 / NBRC 100395).